A 213-amino-acid chain; its full sequence is RNA polymerase I subunit H (213 aa).

Positions 1-19 (MVERMKKDTGDETKTKVQE) are enriched in basic and acidic residues. The disordered stretch occupies residues 1 to 70 (MVERMKKDTG…AREFTDKPWR (70 aa)). Residues 21-31 (PPSPSPPPPPP) show a composition bias toward pro residues. 2 stretches are compositionally biased toward basic and acidic residues: residues 43–53 (VPEREKKQIER) and 60–69 (HAREFTDKPW).

Expressed during spermatogenesis, initially at pachytene stage with abundance increasing in round spermatids and decreasing again during spermatid elongation.

May be involved in male sterility. The protein is RNA polymerase I subunit H of Mus musculus (Mouse).